The sequence spans 368 residues: Agmatine deiminase (368 aa).

Cys-357 (amidino-cysteine intermediate) is an active-site residue.

It belongs to the agmatine deiminase family. As to quaternary structure, homodimer.

It carries out the reaction agmatine + H2O = N-carbamoylputrescine + NH4(+). It functions in the pathway amine and polyamine biosynthesis; putrescine biosynthesis via agmatine pathway; N-carbamoylputrescine from agmatine: step 1/1. Its function is as follows. Mediates the hydrolysis of agmatine into N-carbamoylputrescine in the arginine decarboxylase (ADC) pathway of putrescine biosynthesis, a basic polyamine. This chain is Agmatine deiminase, found in Pseudomonas putida (strain ATCC 700007 / DSM 6899 / JCM 31910 / BCRC 17059 / LMG 24140 / F1).